We begin with the raw amino-acid sequence, 215 residues long: Ribosomal RNA small subunit methyltransferase G (215 aa).

Residues Gly-73, Leu-78, Ala-125–Glu-126, and Arg-140 each bind S-adenosyl-L-methionine.

It belongs to the methyltransferase superfamily. RNA methyltransferase RsmG family.

It localises to the cytoplasm. Specifically methylates the N7 position of guanine in position 518 of 16S rRNA. The chain is Ribosomal RNA small subunit methyltransferase G from Renibacterium salmoninarum (strain ATCC 33209 / DSM 20767 / JCM 11484 / NBRC 15589 / NCIMB 2235).